The sequence spans 62 residues: UPF0291 protein CLD_1956 (62 aa).

This sequence belongs to the UPF0291 family.

It localises to the cytoplasm. The sequence is that of UPF0291 protein CLD_1956 from Clostridium botulinum (strain Okra / Type B1).